We begin with the raw amino-acid sequence, 108 residues long: MDIVKVCPELHIVMDVDSGLIAEMRKDILVVDLHPVEDEINKLAQYAKALENSLDPRNSPMKAYNGREGTYKLAGMFQGMFFGFWVTMAILVLVTILAVKMNLSLIGL.

A helical membrane pass occupies residues 79–99 (GMFFGFWVTMAILVLVTILAV).

It belongs to the MtrB family. In terms of assembly, the complex is composed of 8 subunits; MtrA, MtrB, MtrC, MtrD, MtrE, MtrF, MtrG and MtrH.

The protein localises to the cell membrane. The catalysed reaction is 5-methyl-5,6,7,8-tetrahydromethanopterin + coenzyme M + 2 Na(+)(in) = 5,6,7,8-tetrahydromethanopterin + methyl-coenzyme M + 2 Na(+)(out). It functions in the pathway one-carbon metabolism; methanogenesis from CO(2); methyl-coenzyme M from 5,10-methylene-5,6,7,8-tetrahydromethanopterin: step 2/2. Part of a complex that catalyzes the formation of methyl-coenzyme M and tetrahydromethanopterin from coenzyme M and methyl-tetrahydromethanopterin. This is an energy-conserving, sodium-ion translocating step. This Methanococcus maripaludis (strain C7 / ATCC BAA-1331) protein is Tetrahydromethanopterin S-methyltransferase subunit B.